Reading from the N-terminus, the 611-residue chain is L-tyrosine decarboxylase (611 aa).

Pyridoxal 5'-phosphate contacts are provided by residues 151–152, threonine 292, and 382–384; these read GS and DPH. The residue at position 385 (lysine 385) is an N6-(pyridoxal phosphate)lysine. The active-site Proton donor is the tyrosine 413. Residue serine 433 coordinates pyridoxal 5'-phosphate.

It belongs to the group II decarboxylase family. Tyrosine decarboxylase subfamily. In terms of assembly, homodimer. Requires pyridoxal 5'-phosphate as cofactor.

It catalyses the reaction L-tyrosine + H(+) = tyramine + CO2. It carries out the reaction L-dopa + H(+) = dopamine + CO2. It functions in the pathway amino-acid metabolism. Its activity is regulated as follows. Levodopa decarboxylation is not inhibited by carbidopa, benserazide, and methyldopa, that are three human L-dopa decarboxylase inhibitors. Functionally, catalyzes the decarboxylation of L-tyrosine to produce tyramine. Plays a role in acid resistance since tyramine production via tyrosine decarboxylation appears to provide a cytosolic pH maintenance mechanism that helps the bacterium cope with acid stress such as that encountered in gastrointestinal tract (GIT) environments. Therefore, may contribute to the colonization of the human GIT by E.faecium. Its function is as follows. Also involved in drug metabolism, being able to catalyze decarboxylation of levodopa (L-dopa) to dopamine. In gut microbiota this enzyme is in fact exclusively responsible for the decarboxylation of levodopa, and thus reduces in situ levels of levodopa in the treatment of Parkinson's disease. It was shown that abundance of bacterial tyrosine decarboxylase in the proximal small intestine - the primary site of levodopa absorption - contributes to interindividual variation in drug efficacy and can explain the requirement for an increased dosage regimen of levodopa treatment in Parkinson's disease patients. This Enterococcus faecium (Streptococcus faecium) protein is L-tyrosine decarboxylase.